We begin with the raw amino-acid sequence, 35 residues long: Non-specific lipid-transfer protein 1 (35 aa).

An intrachain disulfide couples Cys-13 to Cys-28.

As to expression, seeds.

In terms of biological role, plant non-specific lipid-transfer proteins transfer phospholipids as well as galactolipids across membranes. May play a role in wax or cutin deposition in the cell walls of expanding epidermal cells and certain secretory tissues. Inhibits the growth of F.oxysporum and P.infestans. The polypeptide is Non-specific lipid-transfer protein 1 (Nigella sativa (Black cumin)).